Consider the following 130-residue polypeptide: DCPWDWSSHEGHCYKVFKFATTWEDAEKFCTEQARGGHLISIKSTEEVDFMIKLAYPILKANLVWIGLRVEDFWRDCHMGWRDHANLLSKPGVVHNTKCFGLDQKTGYRTWVALRCELAYHFICMSRVPR.

3 disulfides stabilise this stretch: Cys2/Cys13, Cys30/Cys124, and Cys99/Cys116. In terms of domain architecture, C-type lectin spans 9–125; it reads HEGHCYKVFK…CELAYHFICM (117 aa).

It belongs to the snaclec family. Heterodimer; disulfide-linked. Expressed by the venom gland.

Its subcellular location is the secreted. In terms of biological role, interferes with one step of hemostasis (modulation of platelet aggregation, or coagulation cascade, for example). This is Snaclec B8 from Macrovipera lebetinus (Levantine viper).